Reading from the N-terminus, the 32-residue chain is Cytochrome b6-f complex subunit 6 (32 aa).

The chain crosses the membrane as a helical span at residues 6-26 (VFYIVFIALFFGIAVGIIFAI).

It belongs to the PetL family. As to quaternary structure, the 4 large subunits of the cytochrome b6-f complex are cytochrome b6, subunit IV (17 kDa polypeptide, PetD), cytochrome f and the Rieske protein, while the 4 small subunits are PetG, PetL, PetM and PetN. The complex functions as a dimer.

It localises to the cellular thylakoid membrane. Functionally, component of the cytochrome b6-f complex, which mediates electron transfer between photosystem II (PSII) and photosystem I (PSI), cyclic electron flow around PSI, and state transitions. PetL is important for photoautotrophic growth as well as for electron transfer efficiency and stability of the cytochrome b6-f complex. The polypeptide is Cytochrome b6-f complex subunit 6 (Mastigocladus laminosus (Fischerella sp.)).